The following is a 549-amino-acid chain: Beta-hexosaminidase Amuc_0868 (549 aa).

A signal peptide spans 1 to 28 (MISKCTFSATVFSLFSLCWGAPSSPVLE). Arg161 lines the substrate pocket. Catalysis depends on charge relay system residues Asp190 and His260. Substrate is bound at residue Asp326. Glu327 functions as the Charge relay system in the catalytic mechanism. Residues Trp393, 420-422 (YFD), and 474-476 (WTE) contribute to the substrate site. The disordered stretch occupies residues 526 to 549 (GVNYKRPDNGAPAQPKAVITRERR).

The protein belongs to the glycosyl hydrolase 20 family.

The enzyme catalyses Hydrolysis of terminal non-reducing N-acetyl-D-hexosamine residues in N-acetyl-beta-D-hexosaminides.. With respect to regulation, inhibited strongly by Cu(2+), Zn(2+), Cd(2+) and Ni(2+) ions. No effect on activity with Na(+), Li(+), K(+), Ca(2+), Mg(2+) or Mn(2+) ions. Its function is as follows. Potentially capable of cleaving the specific glycoside linkages in the process of mucin degradation in human intestinal tract. Hydrolyzes chromogenic substrates pNP-beta-GlcNAc with high activity and pNP-beta-GalNAc to a lesser extent, but not pNP-beta-glucose or pNP-beta-galactose. In Akkermansia muciniphila (strain ATCC BAA-835 / DSM 22959 / JCM 33894 / BCRC 81048 / CCUG 64013 / CIP 107961 / Muc), this protein is Beta-hexosaminidase Amuc_0868.